A 439-amino-acid polypeptide reads, in one-letter code: Xaa-Pro dipeptidase (439 aa).

The Mn(2+) site is built by Asp244, Asp255, His335, Glu380, and Glu419.

It belongs to the peptidase M24B family. Bacterial-type prolidase subfamily. Mn(2+) serves as cofactor.

The enzyme catalyses Xaa-L-Pro dipeptide + H2O = an L-alpha-amino acid + L-proline. Functionally, splits dipeptides with a prolyl residue in the C-terminal position. This Shewanella sediminis (strain HAW-EB3) protein is Xaa-Pro dipeptidase.